Reading from the N-terminus, the 427-residue chain is Ectoine TRAP transporter large permease protein TeaC (427 aa).

12 consecutive transmembrane segments (helical) span residues 13 to 35, 49 to 69, 79 to 99, 103 to 123, 147 to 167, 172 to 192, 216 to 236, 237 to 257, 273 to 293, 320 to 340, 356 to 376, and 400 to 420; these read LLLG…FMMF, MAGI…AADI, LINM…VSTA, TLFG…GSPL, IAFL…SGTS, FIAG…YCVI, LALW…GGIF, SPTE…FVVF, GLIT…SWII, ICVA…ILVL, VLVG…PPFG, and FIFM…IALF.

The protein belongs to the TRAP transporter large permease family. The complex comprises the extracytoplasmic solute receptor protein TeaA, and the two transmembrane proteins TeaB and TeaC.

The protein localises to the cell inner membrane. Its function is as follows. Part of the tripartite ATP-independent periplasmic (TRAP) transport system TeaABC involved in the uptake of ectoine and hydroxyectoine in response to osmotic upshock. Probably functions as a recovery system for synthesized ectoine that leaks out of the cell. The protein is Ectoine TRAP transporter large permease protein TeaC (teaC) of Halomonas elongata (strain ATCC 33173 / DSM 2581 / NBRC 15536 / NCIMB 2198 / 1H9).